Here is a 287-residue protein sequence, read N- to C-terminus: Orotidine 5'-phosphate decarboxylase (287 aa).

The Proton donor role is filled by Lys99.

The protein belongs to the OMP decarboxylase family. Type 2 subfamily.

It catalyses the reaction orotidine 5'-phosphate + H(+) = UMP + CO2. The protein operates within pyrimidine metabolism; UMP biosynthesis via de novo pathway; UMP from orotate: step 2/2. The protein is Orotidine 5'-phosphate decarboxylase of Clostridium novyi (strain NT).